Here is a 193-residue protein sequence, read N- to C-terminus: MSTSLLFSLSPSSSSSMRLRASNSFPILNFFLDLDATPSLSSSSASFSELSAPLSIVSRPFCTRDDPLPSDLMNPLLKSPFSLTKFPAANGPLEITCVLFKYLAIRLCWPPAPVTLLFLLLKCFLSLPLLDSSSSFTLDAAASLSSLDFLATAFGLNFNEGLADPPPLEEESFNDGKRPFPLLLLILNECYPA.

A signal peptide spans 1 to 14 (MSTSLLFSLSPSSS).

This is an uncharacterized protein from Saccharomyces cerevisiae (strain ATCC 204508 / S288c) (Baker's yeast).